Reading from the N-terminus, the 444-residue chain is 23S rRNA (uracil(1939)-C(5))-methyltransferase RlmD (444 aa).

The TRAM domain occupies 5 to 67 (RNRFDRTPFQ…RHFDEAKTVE (63 aa)). Residues cysteine 80, cysteine 86, cysteine 89, and cysteine 168 each contribute to the [4Fe-4S] cluster site. Residues glutamine 276, phenylalanine 305, asparagine 310, glutamate 326, aspartate 353, and aspartate 374 each coordinate S-adenosyl-L-methionine. Cysteine 400 (nucleophile) is an active-site residue.

The protein belongs to the class I-like SAM-binding methyltransferase superfamily. RNA M5U methyltransferase family. RlmD subfamily.

The enzyme catalyses uridine(1939) in 23S rRNA + S-adenosyl-L-methionine = 5-methyluridine(1939) in 23S rRNA + S-adenosyl-L-homocysteine + H(+). In terms of biological role, catalyzes the formation of 5-methyl-uridine at position 1939 (m5U1939) in 23S rRNA. The protein is 23S rRNA (uracil(1939)-C(5))-methyltransferase RlmD of Xanthomonas campestris pv. campestris (strain 8004).